Consider the following 384-residue polypeptide: S-adenosylmethionine synthase (384 aa).

His-15 contributes to the ATP binding site. Residue Asp-17 participates in Mg(2+) binding. Glu-43 lines the K(+) pocket. Residues Glu-56 and Gln-99 each contribute to the L-methionine site. The tract at residues 99 to 109 is flexible loop; sequence QSPDINQGVDR. ATP-binding positions include 164–166, 230–231, Asp-239, 245–246, Ala-262, and Lys-266; these read DAK, RF, and RK. Residue Asp-239 participates in L-methionine binding. Lys-270 serves as a coordination point for L-methionine.

The protein belongs to the AdoMet synthase family. In terms of assembly, homotetramer; dimer of dimers. Mg(2+) is required as a cofactor. K(+) serves as cofactor.

It localises to the cytoplasm. It catalyses the reaction L-methionine + ATP + H2O = S-adenosyl-L-methionine + phosphate + diphosphate. Its pathway is amino-acid biosynthesis; S-adenosyl-L-methionine biosynthesis; S-adenosyl-L-methionine from L-methionine: step 1/1. Catalyzes the formation of S-adenosylmethionine (AdoMet) from methionine and ATP. The overall synthetic reaction is composed of two sequential steps, AdoMet formation and the subsequent tripolyphosphate hydrolysis which occurs prior to release of AdoMet from the enzyme. The sequence is that of S-adenosylmethionine synthase from Proteus mirabilis (strain HI4320).